We begin with the raw amino-acid sequence, 209 residues long: Ribosomal RNA small subunit methyltransferase G (209 aa).

3 residues coordinate S-adenosyl-L-methionine: G74, F79, and R139.

Belongs to the methyltransferase superfamily. RNA methyltransferase RsmG family.

The protein resides in the cytoplasm. The catalysed reaction is guanosine(527) in 16S rRNA + S-adenosyl-L-methionine = N(7)-methylguanosine(527) in 16S rRNA + S-adenosyl-L-homocysteine. In terms of biological role, specifically methylates the N7 position of guanine in position 527 of 16S rRNA. This chain is Ribosomal RNA small subunit methyltransferase G, found in Halorhodospira halophila (strain DSM 244 / SL1) (Ectothiorhodospira halophila (strain DSM 244 / SL1)).